Consider the following 400-residue polypeptide: MQELEKAVPSSVRVTRQSENLVILEKDLATEQMVLAMGPQHPSTHGVLKLECLTDGEVVTEAEPVLGYLHRCFEKTAENVDYPAVVPFTDRLDYLAAMNSEFAYALTVEKLLDIEIPRRVEFIRILVAELNRIASHLVAIGTYGIDLGAFTPFLFCFRDREIILGLLEWASGARMLYNYVWVGGLAYDVPADFLKRIREFCAYFRPKAKELADLLTSNEIFVKRTHGIGIMPADVAINYGWSGPMLRGSGVEWDLRRNDPYSLYSELDFNVCVPDGKHSVIGDCLSRHLVRAYEMEESLNIIEQCIDKMPSSDGFNSRAAIPKKIRPKAGEVYGRAENPRGELGFYIQSDGKSTKPLRCKARSSCFVNLSAMKDLSKGQLIPDLVAIIGSIDIVLGEVDR.

This sequence belongs to the complex I 49 kDa subunit family. NDH-1 is composed of 14 different subunits. Subunits NuoB, C, D, E, F, and G constitute the peripheral sector of the complex.

It is found in the cell inner membrane. It carries out the reaction a quinone + NADH + 5 H(+)(in) = a quinol + NAD(+) + 4 H(+)(out). In terms of biological role, NDH-1 shuttles electrons from NADH, via FMN and iron-sulfur (Fe-S) centers, to quinones in the respiratory chain. The immediate electron acceptor for the enzyme in this species is believed to be a menaquinone. Couples the redox reaction to proton translocation (for every two electrons transferred, four hydrogen ions are translocated across the cytoplasmic membrane), and thus conserves the redox energy in a proton gradient. The polypeptide is NADH-quinone oxidoreductase subunit D (Chlorobium chlorochromatii (strain CaD3)).